Reading from the N-terminus, the 248-residue chain is Probable transcriptional regulatory protein Oter_1471 (248 aa).

This sequence belongs to the TACO1 family.

Its subcellular location is the cytoplasm. The protein is Probable transcriptional regulatory protein Oter_1471 of Opitutus terrae (strain DSM 11246 / JCM 15787 / PB90-1).